Consider the following 1581-residue polypeptide: Pentafunctional AROM polypeptide (1581 aa).

Residues 1-384 (MPEPTKISIL…YEPKASVVPN (384 aa)) are 3-dehydroquinate synthase. NAD(+) is bound by residues 44-46 (DTN), 81-84 (EVSK), 114-116 (GGV), and Asp-119. Residue Arg-130 participates in 7-phospho-2-dehydro-3-deoxy-D-arabino-heptonate binding. An NAD(+)-binding site is contributed by 139–140 (TT). Residues Asp-146 and Lys-152 each contribute to the 7-phospho-2-dehydro-3-deoxy-D-arabino-heptonate site. Lys-161 is an NAD(+) binding site. A 7-phospho-2-dehydro-3-deoxy-D-arabino-heptonate-binding site is contributed by Asn-162. NAD(+) is bound by residues 179 to 182 (FLET) and Asn-190. Residue Glu-194 coordinates Zn(2+). Residues 194 to 197 (EVIK) and Lys-250 contribute to the 7-phospho-2-dehydro-3-deoxy-D-arabino-heptonate site. The active-site Proton acceptor; for 3-dehydroquinate synthase activity is the Glu-260. 7-phospho-2-dehydro-3-deoxy-D-arabino-heptonate is bound by residues 264-268 (RNLLN) and His-271. A Zn(2+)-binding site is contributed by His-271. His-275 serves as the catalytic Proton acceptor; for 3-dehydroquinate synthase activity. 7-phospho-2-dehydro-3-deoxy-D-arabino-heptonate-binding residues include His-287 and Lys-356. His-287 is a binding site for Zn(2+). Residues 397 to 842 (VHPGVPKESN…WDTLRQLFSV (446 aa)) are EPSP synthase. Cys-824 serves as the catalytic For EPSP synthase activity. Positions 864–1056 (SASVFIIGMR…KQKKHSFFVS (193 aa)) are shikimate kinase. ATP is bound at residue 871 to 878 (GMRGAGKT). The segment at 1057–1277 (LTLPDLRSAS…AAPGQLSATE (221 aa)) is 3-dehydroquinase. Catalysis depends on His-1180, which acts as the Proton acceptor; for 3-dehydroquinate dehydratase activity. The Schiff-base intermediate with substrate; for 3-dehydroquinate dehydratase activity role is filled by Lys-1208. The segment at 1290–1581 (KKRFAIFGNP…ARTAVLGDSA (292 aa)) is shikimate dehydrogenase.

The protein in the N-terminal section; belongs to the sugar phosphate cyclases superfamily. Dehydroquinate synthase family. This sequence in the 2nd section; belongs to the EPSP synthase family. In the 3rd section; belongs to the shikimate kinase family. It in the 4th section; belongs to the type-I 3-dehydroquinase family. The protein in the C-terminal section; belongs to the shikimate dehydrogenase family. As to quaternary structure, homodimer. The cofactor is Zn(2+).

The protein resides in the cytoplasm. The enzyme catalyses 7-phospho-2-dehydro-3-deoxy-D-arabino-heptonate = 3-dehydroquinate + phosphate. The catalysed reaction is 3-dehydroquinate = 3-dehydroshikimate + H2O. It carries out the reaction shikimate + NADP(+) = 3-dehydroshikimate + NADPH + H(+). It catalyses the reaction shikimate + ATP = 3-phosphoshikimate + ADP + H(+). The enzyme catalyses 3-phosphoshikimate + phosphoenolpyruvate = 5-O-(1-carboxyvinyl)-3-phosphoshikimate + phosphate. It functions in the pathway metabolic intermediate biosynthesis; chorismate biosynthesis; chorismate from D-erythrose 4-phosphate and phosphoenolpyruvate: step 2/7. The protein operates within metabolic intermediate biosynthesis; chorismate biosynthesis; chorismate from D-erythrose 4-phosphate and phosphoenolpyruvate: step 3/7. It participates in metabolic intermediate biosynthesis; chorismate biosynthesis; chorismate from D-erythrose 4-phosphate and phosphoenolpyruvate: step 4/7. Its pathway is metabolic intermediate biosynthesis; chorismate biosynthesis; chorismate from D-erythrose 4-phosphate and phosphoenolpyruvate: step 5/7. It functions in the pathway metabolic intermediate biosynthesis; chorismate biosynthesis; chorismate from D-erythrose 4-phosphate and phosphoenolpyruvate: step 6/7. Functionally, the AROM polypeptide catalyzes 5 consecutive enzymatic reactions in prechorismate polyaromatic amino acid biosynthesis. The sequence is that of Pentafunctional AROM polypeptide from Aspergillus terreus (strain NIH 2624 / FGSC A1156).